The following is a 203-amino-acid chain: MFKNLIFLFFIGLATAIRFNLTDLECSRLRGPHCGTYLLKVVGTNATYVGEKSFIGLDALTESKGEFFQRMLEQEPRLIPRLFTIAENDTANFTPLTFTTYLKTCNPQSIENAMIPFVNTVTSEISFDAWAYTAQNSSRITGLSNQLMNSTLYNVQVATCTPGFSALLLDSPTINVFNNEEGMPSWCQPIELTPVCPLDEGFN.

Positions Met1–Ala16 are cleaved as a signal peptide.

Belongs to the VEL1 family.

It localises to the cytoplasm. Its subcellular location is the cytosol. The chain is VEL1-related protein SPBPB2B2.15 from Schizosaccharomyces pombe (strain 972 / ATCC 24843) (Fission yeast).